The chain runs to 571 residues: Adenine deaminase (571 aa).

It belongs to the metallo-dependent hydrolases superfamily. Adenine deaminase family. Requires Mn(2+) as cofactor.

It carries out the reaction adenine + H2O + H(+) = hypoxanthine + NH4(+). The protein is Adenine deaminase of Dehalococcoides mccartyi (strain CBDB1).